A 310-amino-acid polypeptide reads, in one-letter code: Melanocyte-stimulating hormone receptor (310 aa).

Residues 1–37 (MPMQGAQRKLLGSLNSTPTATSNLGLAANRTGAPCLE) are Extracellular-facing. N-linked (GlcNAc...) asparagine glycosylation occurs at Asn29. The helical transmembrane segment at 38 to 63 (LPIPDGLFLSLGLVSLVENVLVVAAI) threads the bilayer. Over 64-72 (AKNRNLHSS) the chain is Cytoplasmic. Residues 73–93 (MYCFICCLALSDLLVSGSNML) form a helical membrane-spanning segment. The Extracellular segment spans residues 94–110 (EAGVLATRASVVQQLHN). Residues 111-132 (TIDVLTCSSMLCSLCFLGAIAV) form a helical membrane-spanning segment. Residues 133–155 (DRYISIFYALRYHSIMTLPRAQR) lie on the Cytoplasmic side of the membrane. The chain crosses the membrane as a helical span at residues 156–175 (AVAAIWVASVLSSTLFITYY). Residues 176–183 (DHAAVLLC) are Extracellular-facing. A helical transmembrane segment spans residues 184–203 (LVVFFLAMLVLMAVLYVHML). The Cytoplasmic portion of the chain corresponds to 204-232 (AWACQHAQGIIRLHKRQPPAHKGFGLRGA). The helical transmembrane segment at 233–258 (ATLTILLGIFFLCWGPFFLRLTLVVF) threads the bilayer. At 259–271 (CPQHLTCNCIFKN) the chain is on the extracellular side. A helical membrane pass occupies residues 272-292 (FKVFLTLIICNTIIDPLIYAF). Residues 293–310 (RSQELRRTLKEVLGRGRW) lie on the Cytoplasmic side of the membrane.

The protein belongs to the G-protein coupled receptor 1 family. Interacts with MGRN1, but does not undergo MGRN1-mediated ubiquitination; this interaction competes with GNAS-binding and thus inhibits agonist-induced cAMP production. Interacts with OPN3; the interaction results in a decrease in MC1R-mediated cAMP signaling and ultimately a decrease in melanin production in melanocytes.

The protein resides in the cell membrane. Receptor for MSH (alpha, beta and gamma) and ACTH. The activity of this receptor is mediated by G proteins which activate adenylate cyclase. Mediates melanogenesis, the production of eumelanin (black/brown) and phaeomelanin (red/yellow), via regulation of cAMP signaling in melanocytes. The polypeptide is Melanocyte-stimulating hormone receptor (MC1R) (Leontopithecus chrysomelas (Golden-headed lion tamarin)).